The sequence spans 184 residues: Signal peptidase complex subunit 3 (184 aa).

Residues 1–14 (MFSFVQRFQNVSNQ) are Cytoplasmic-facing. A helical; Signal-anchor for type II membrane protein transmembrane segment spans residues 15–35 (AFSMGIVMVVFIMASSYYQLI). Residues 36 to 184 (NNNAFSVPSN…TLTVENKNKV (149 aa)) lie on the Lumenal side of the membrane. N-linked (GlcNAc...) asparagine glycosylation is found at asparagine 102 and asparagine 173.

This sequence belongs to the SPCS3 family. As to quaternary structure, component of the signal peptidase complex (SPC) composed of a catalytic subunit SEC11 and three accessory subunits SPC1, SPC2 and SPC3. The complex induces a local thinning of the ER membrane which is used to measure the length of the signal peptide (SP) h-region of protein substrates. This ensures the selectivity of the complex towards h-regions shorter than 18-20 amino acids. Interacts with SEC11. SPC associates with the translocon complex.

Its subcellular location is the endoplasmic reticulum membrane. In terms of biological role, essential component of the signal peptidase complex (SPC) which catalyzes the cleavage of N-terminal signal sequences from nascent proteins as they are translocated into the lumen of the endoplasmic reticulum. Essential for the SPC catalytic activity, possibly by stabilizing and positioning the active center of the complex close to the lumenal surface. Essential for viability. The sequence is that of Signal peptidase complex subunit 3 (SPC3) from Saccharomyces cerevisiae (strain ATCC 204508 / S288c) (Baker's yeast).